The sequence spans 311 residues: Probable manganese-dependent inorganic pyrophosphatase (311 aa).

Residues histidine 9, aspartate 13, aspartate 15, aspartate 77, histidine 99, and aspartate 151 each coordinate Mn(2+).

The protein belongs to the PPase class C family. Mn(2+) serves as cofactor.

It is found in the cytoplasm. It catalyses the reaction diphosphate + H2O = 2 phosphate + H(+). The protein is Probable manganese-dependent inorganic pyrophosphatase of Streptococcus suis (strain 98HAH33).